We begin with the raw amino-acid sequence, 147 residues long: MSDQHNLKEQLCFSLYNAQRQVNRYYSNKVFKKYNLTYPQFLVLTILWDESPVNVKKVVTELALDTGTVSPLLKRMEQVDLIKRERSEVDQREVFIHLTDKSETIRPELSNASDKVASASSLSQDEVKELNRLLGKVIHAFDETKEK.

An HTH marR-type domain is found at 8–139 (KEQLCFSLYN…LNRLLGKVIH (132 aa)). A DNA-binding region (H-T-H motif) is located at residues 55-78 (VKKVVTELALDTGTVSPLLKRMEQ).

The protein localises to the cytoplasm. In terms of biological role, regulatory protein involved in autolytic activity, multidrug resistance and virulence. Controls autolysis by inactivating LytM, LytN (autolysins) and SarV (autolysis activator) and activating ArlRS, LrgAB and LytSR (autolysis inhibitors). Acts as a dual regulator for resistance to multiple drugs by inactivating NorB and tet38 and activating NorA. Positively controls the expression of virulence accessory gene regulator (agr) to promote alpha-hemolysin (hla) transcription and down-regulates staphylococcal accessory regulator (sarS), leading to repression of surface protein A (spa). Binds directly to hla promoter to augment its activation. Binds to sarS promoter to down-regulate spa expression. The polypeptide is HTH-type transcriptional regulator MgrA (mgrA) (Staphylococcus aureus (strain NCTC 8325 / PS 47)).